Here is a 419-residue protein sequence, read N- to C-terminus: Ubiquitin-like modifier-activating enzyme 5 (419 aa).

The interval 18 to 47 (NRLGNVKKDHPLESSSNSKPTHQPKSPAPY) is disordered. Over residues 30 to 41 (ESSSNSKPTHQP) the composition is skewed to polar residues. ATP contacts are provided by Gly94, Asp115, Lys138, Asn161, and Asn194. Zn(2+) contacts are provided by Cys236 and Cys239. The active-site Glycyl thioester intermediate is the Cys260. Cys313 and Cys318 together coordinate Zn(2+).

Belongs to the ubiquitin-activating E1 family. UBA5 subfamily. As to quaternary structure, interacts with ufc-1. In terms of tissue distribution, expressed in the intestine.

In terms of biological role, E1-like enzyme which activates ufm-1. Required for interaction between ufm-1 and ufc-1. The chain is Ubiquitin-like modifier-activating enzyme 5 from Caenorhabditis elegans.